We begin with the raw amino-acid sequence, 311 residues long: N-acetylmuramic acid 6-phosphate etherase (311 aa).

Positions 66–230 constitute an SIS domain; sequence VVEAFEADGR…TTAAMVRLGK (165 aa). Catalysis depends on E94, which acts as the Proton donor. Residue E125 is part of the active site.

It belongs to the GCKR-like family. MurNAc-6-P etherase subfamily. In terms of assembly, homodimer.

The enzyme catalyses N-acetyl-D-muramate 6-phosphate + H2O = N-acetyl-D-glucosamine 6-phosphate + (R)-lactate. It participates in amino-sugar metabolism; N-acetylmuramate degradation. Specifically catalyzes the cleavage of the D-lactyl ether substituent of MurNAc 6-phosphate, producing GlcNAc 6-phosphate and D-lactate. In Salinibacter ruber (strain DSM 13855 / M31), this protein is N-acetylmuramic acid 6-phosphate etherase.